A 263-amino-acid chain; its full sequence is L-aspartate dehydrogenase (263 aa).

The NAD(+) site is built by alanine 120 and asparagine 186. The active site involves histidine 216.

Belongs to the L-aspartate dehydrogenase family.

It catalyses the reaction L-aspartate + NADP(+) + H2O = oxaloacetate + NH4(+) + NADPH + H(+). The catalysed reaction is L-aspartate + NAD(+) + H2O = oxaloacetate + NH4(+) + NADH + H(+). The protein operates within cofactor biosynthesis; NAD(+) biosynthesis; iminoaspartate from L-aspartate (dehydrogenase route): step 1/1. Its function is as follows. Specifically catalyzes the NAD or NADP-dependent dehydrogenation of L-aspartate to iminoaspartate. The protein is L-aspartate dehydrogenase of Acinetobacter baylyi (strain ATCC 33305 / BD413 / ADP1).